We begin with the raw amino-acid sequence, 442 residues long: tRNA-2-methylthio-N(6)-dimethylallyladenosine synthase (442 aa).

The MTTase N-terminal domain maps to 6–122 (RKFYIHTFGC…LPVLIAEAGK (117 aa)). Residues Cys-15, Cys-51, Cys-85, Cys-157, Cys-161, and Cys-164 each coordinate [4Fe-4S] cluster. The 231-residue stretch at 143–373 (RTQSLTAFVP…IDLQNGISAE (231 aa)) folds into the Radical SAM core domain. The TRAM domain occupies 376–439 (RLAIGSVVEV…SATLIGRAAE (64 aa)).

This sequence belongs to the methylthiotransferase family. MiaB subfamily. As to quaternary structure, monomer. [4Fe-4S] cluster is required as a cofactor.

It is found in the cytoplasm. It carries out the reaction N(6)-dimethylallyladenosine(37) in tRNA + (sulfur carrier)-SH + AH2 + 2 S-adenosyl-L-methionine = 2-methylsulfanyl-N(6)-dimethylallyladenosine(37) in tRNA + (sulfur carrier)-H + 5'-deoxyadenosine + L-methionine + A + S-adenosyl-L-homocysteine + 2 H(+). Catalyzes the methylthiolation of N6-(dimethylallyl)adenosine (i(6)A), leading to the formation of 2-methylthio-N6-(dimethylallyl)adenosine (ms(2)i(6)A) at position 37 in tRNAs that read codons beginning with uridine. The protein is tRNA-2-methylthio-N(6)-dimethylallyladenosine synthase of Chlorobium limicola (strain DSM 245 / NBRC 103803 / 6330).